A 90-amino-acid polypeptide reads, in one-letter code: Small ribosomal subunit protein uS17 (90 aa).

The protein belongs to the universal ribosomal protein uS17 family. As to quaternary structure, part of the 30S ribosomal subunit.

Functionally, one of the primary rRNA binding proteins, it binds specifically to the 5'-end of 16S ribosomal RNA. The polypeptide is Small ribosomal subunit protein uS17 (Treponema denticola (strain ATCC 35405 / DSM 14222 / CIP 103919 / JCM 8153 / KCTC 15104)).